The chain runs to 566 residues: OTU domain-containing protein 5 (566 aa).

2 disordered regions span residues methionine 1–leucine 117 and glycine 145–tyrosine 175. The span at proline 11–proline 30 shows a compositional bias: pro residues. Residues alanine 34 to glycine 47 are compositionally biased toward gly residues. The span at alanine 63 to proline 75 shows a compositional bias: pro residues. Serine 64 is subject to Phosphoserine. The segment covering alanine 84 to glutamine 97 has biased composition (low complexity). Over residues glycine 105–aspartate 115 the composition is skewed to gly residues. A Phosphoserine modification is found at serine 165. A Phosphotyrosine modification is found at tyrosine 175. At serine 177 the chain carries Phosphoserine. Threonine 195 is subject to Phosphothreonine. The region spanning phenylalanine 213–proline 336 is the OTU domain. Positions methionine 218–cysteine 224 are cys-loop. Residue aspartate 221 is part of the active site. The active-site Nucleophile is the cysteine 224. Residues lysine 273–isoleucine 283 are variable-loop. Serine 323 is modified (phosphoserine). The segment at tyrosine 324–histidine 329 is his-loop. Histidine 329 is an active-site residue. A phosphoserine mark is found at serine 332 and serine 370. The tract at residues alanine 413 to aspartate 499 is disordered. Composition is skewed to low complexity over residues alanine 425–serine 438 and serine 445–proline 457. Serine 447 carries the phosphoserine modification. The residue at position 502 (threonine 502) is a Phosphothreonine. Position 503 is a phosphoserine (serine 503).

Belongs to the peptidase C85 family. Interacts with TRAF3. Phosphorylation at Ser-177 is required for deubiquitinating activity. Phosphorylation at Ser-323, Ser-332 and Ser-503 by MTOR promotes its activity.

The protein localises to the nucleus. The catalysed reaction is Thiol-dependent hydrolysis of ester, thioester, amide, peptide and isopeptide bonds formed by the C-terminal Gly of ubiquitin (a 76-residue protein attached to proteins as an intracellular targeting signal).. With respect to regulation, inhibited by N-ethyl-maleimide (NEM). Its function is as follows. Deubiquitinating enzyme that functions as a negative regulator of the innate immune system. Has peptidase activity towards 'Lys-48'- and 'Lys-63'-linked polyubiquitin chains. Can also cleave 'Lys-11'-linked ubiquitin chains (in vitro). Acts via TRAF3 deubiquitination and subsequent suppression of type I interferon (IFN) production. Controls neuroectodermal differentiation through cleaving 'Lys-48'-linked ubiquitin chains to counteract degradation of select chromatin regulators such as ARID1A, HDAC2 and HCF1. Acts as a positive regulator of mTORC1 and mTORC2 signaling following phosphorylation by MTOR: acts by mediating deubiquitination of BTRC, leading to its stability. The chain is OTU domain-containing protein 5 from Mus musculus (Mouse).